An 813-amino-acid polypeptide reads, in one-letter code: Tax1-binding protein 1 homolog (813 aa).

Residues Ser-124, Ser-138, and Ser-225 each carry the phosphoserine modification. Residues 144–627 are a coiled coil; the sequence is TTKAGLLELK…LENQAERKME (484 aa). Residues 320–420 form an oligomerization region; sequence EEIGRLQLCL…ELKLNAMKKD (101 aa). Residues 489–502 are compositionally biased toward polar residues; that stretch reads DASVNTDPATSAST. Positions 489-508 are disordered; sequence DASVNTDPATSASTVDVKPS. A phosphoserine mark is found at Ser-617, Ser-633, and Ser-690. A disordered region spans residues 663 to 738; it reads YASQETRDGA…DPPSQHLRGH (76 aa). UBZ1-type zinc fingers lie at residues 751-777 and 778-804; these read HKKCPLCELMFPPNYDQSKFEEHVESH and WKVCPMCSEQFPPDYDQQVFERHVQTH. Residues Cys-754, Cys-757, His-773, His-777, Cys-781, Cys-784, His-800, and His-804 each contribute to the Zn(2+) site.

Homooligomer. Interacts with TNFAIP3. Interacts with STARD13. Interacts with MYO6. Interacts with TOM1; the interaction is indirect and is mediated by MYO6, which acts as a bridge between TOM1 and TAX1BP1. Interacts with MAVS; this interaction induces MAVS polyubiquitination. Interacts with TNIP1. Interacts with TRAF6; this interaction mediates deubiquitination of TRAF6 and inhibition of NF-kappa-B activation. Interacts with RIPK1; this interaction negatively regulates RIPK1 ubiquitination. Interacts with NBR1. Interacts with TBK1. Interacts with RB1CC1. Interacts with SQSTM1. Interacts with AZI2.

The protein resides in the cytoplasm. It localises to the mitochondrion. It is found in the preautophagosomal structure. The protein localises to the cytoplasmic vesicle. Its subcellular location is the autophagosome. In terms of biological role, ubiquitin-binding adapter that participates in inflammatory, antiviral and innate immune processes as well as selective autophagy regulation. Plays a key role in the negative regulation of NF-kappa-B and IRF3 signalings by acting as an adapter for the ubiquitin-editing enzyme A20/TNFAIP3 to bind and inactivate its substrates. Disrupts the interactions between the E3 ubiquitin ligase TRAF3 and TBK1/IKBKE to attenuate 'Lys63'-linked polyubiquitination of TBK1 and thereby IFN-beta production. Also recruits A20/TNFAIP3 to ubiquitinated signaling proteins TRAF6 and RIPK1, leading to their deubiquitination and disruption of IL-1 and TNF-induced NF-kappa-B signaling pathways. Inhibits virus-induced apoptosis by inducing the 'Lys-48'-linked polyubiquitination and degradation of MAVS via recruitment of the E3 ligase ITCH, thereby attenuating MAVS-mediated apoptosis signaling. As a macroautophagy/autophagy receptor, facilitates the xenophagic clearance of pathogenic bacteria such as Salmonella typhimurium and Mycobacterium tuberculosis. Upon NBR1 recruitment to the SQSTM1-ubiquitin condensates, acts as the major recruiter of RB1CC1 to these ubiquitin condensates to promote their autophagic degradation. The polypeptide is Tax1-binding protein 1 homolog (TAX1BP1) (Pongo abelii (Sumatran orangutan)).